The sequence spans 472 residues: MAGGEAGVTLGQPHLSRQDLTTLDVTKLTPLSHEVISRQATINIGTIGHVAHGKSTVVKAISGVHTVRFKNELERNITIKLGYANAKIYKLDDPSCPRPECYRSCGSSTPDEFPTDIPGTKGNFKLVRHVSFVDCPGHDILMATMLNGAAVMDAALLLIAGNESCPQPQTSEHLAAIEIMKLKHILILQNKIDLVKESQAKEQYEQILAFVQGTVAEGAPIIPISAQLKYNIEVVCEYIVKKIPVPPRDFTSEPRLIVIRSFDVNKPGCEVDDLKGGVAGGSILKGVLKVGQEIEVRPGIVSKDSEGKLMCKPIFSKIVSLFAEHNDLQYAAPGGLIGVGTKIDPTLCRADRMVGQVLGAVGALPEIFTELEISYFLLRRLLGVRTEGDKKAAKVQKLSKNEVLMVNIGSLSTGGRVSAVKADLGKIVLTNPVCTEVGEKIALSRRVEKHWRLIGWGQIRRGVTIKPTVDDD.

Position 2 is an N-acetylalanine; partial (Ala-2). Ser-16 is modified (phosphoserine). The tr-type G domain occupies 39 to 248 (QATINIGTIG…IVKKIPVPPR (210 aa)). Residues 48–55 (GHVAHGKS) form a G1 region. Position 51–56 (51–56 (AHGKST)) interacts with GTP. Residues 76–80 (NITIK) form a G2 region. The tract at residues 134–137 (DCPG) is G3. Residues 190–193 (NKID) and 225–227 (SAQ) contribute to the GTP site. The interval 190–193 (NKID) is G4. The G5 stretch occupies residues 225 to 227 (SAQ). Residues 457-469 (GQIRRGVTIKPTV) form an interacts with CDC123 region.

This sequence belongs to the TRAFAC class translation factor GTPase superfamily. Classic translation factor GTPase family. EIF2G subfamily. In terms of assembly, eukaryotic translation initiation factor 2 eIF2 is a heterotrimeric complex composed of an alpha (EIF2S1), a beta (EIF2S2) and a gamma (EIF2S3) chain. eIF2 is member of the 43S pre-initiation complex (43S PIC). Interacts (via C-terminus) with CDC123; the interaction is direct. In terms of tissue distribution, expressed in testis, brain, liver and muscle.

The protein resides in the cytoplasm. It is found in the cytosol. It catalyses the reaction GTP + H2O = GDP + phosphate + H(+). Functionally, member of the eIF2 complex that functions in the early steps of protein synthesis by forming a ternary complex with GTP and initiator tRNA. This complex binds to a 40S ribosomal subunit, followed by mRNA binding to form the 43S pre-initiation complex (43S PIC). Junction of the 60S ribosomal subunit to form the 80S initiation complex is preceded by hydrolysis of the GTP bound to eIF2 and release of an eIF2-GDP binary complex. In order for eIF2 to recycle and catalyze another round of initiation, the GDP bound to eIF2 must exchange with GTP by way of a reaction catalyzed by eIF-2B. The polypeptide is Eukaryotic translation initiation factor 2 subunit 3 (EIF2S3) (Homo sapiens (Human)).